The following is a 167-amino-acid chain: Protein YfbM (167 aa).

Monomer.

The polypeptide is Protein YfbM (yfbM) (Escherichia coli (strain K12)).